The primary structure comprises 49 residues: Large ribosomal subunit protein bL33 (49 aa).

Residues 18–49 (ITTKNKRNNPERLELKKYSPRLKRTTLHRETK) form a disordered region. Residues 25 to 34 (NNPERLELKK) are compositionally biased toward basic and acidic residues.

This sequence belongs to the bacterial ribosomal protein bL33 family.

This Lysinibacillus sphaericus (strain C3-41) protein is Large ribosomal subunit protein bL33.